The following is a 263-amino-acid chain: ATP synthase subunit a (263 aa).

6 helical membrane passes run 26-46 (VHLD…FFFS), 86-106 (VAPL…IDLI), 130-150 (DISA…FYTI), 166-186 (PFNH…TLLA), 195-215 (LFGN…MYMA), and 229-249 (LAWA…FMML).

It belongs to the ATPase A chain family. In terms of assembly, F-type ATPases have 2 components, CF(1) - the catalytic core - and CF(0) - the membrane proton channel. CF(1) has five subunits: alpha(3), beta(3), gamma(1), delta(1), epsilon(1). CF(0) has three main subunits: a(1), b(2) and c(9-12). The alpha and beta chains form an alternating ring which encloses part of the gamma chain. CF(1) is attached to CF(0) by a central stalk formed by the gamma and epsilon chains, while a peripheral stalk is formed by the delta and b chains.

It is found in the cell inner membrane. Key component of the proton channel; it plays a direct role in the translocation of protons across the membrane. This chain is ATP synthase subunit a, found in Glaesserella parasuis serovar 5 (strain SH0165) (Haemophilus parasuis).